The sequence spans 801 residues: Leucine--tRNA ligase (801 aa).

The short motif at 40 to 51 is the 'HIGH' region element; it reads PYPSGAGLHVGH. The 'KMSKS' region motif lies at 576–580; it reads KMSKS. Residue Lys579 coordinates ATP.

It belongs to the class-I aminoacyl-tRNA synthetase family.

The protein resides in the cytoplasm. It catalyses the reaction tRNA(Leu) + L-leucine + ATP = L-leucyl-tRNA(Leu) + AMP + diphosphate. The chain is Leucine--tRNA ligase from Exiguobacterium sibiricum (strain DSM 17290 / CCUG 55495 / CIP 109462 / JCM 13490 / 255-15).